The chain runs to 173 residues: RNA pyrophosphohydrolase (173 aa).

In terms of domain architecture, Nudix hydrolase spans 13 to 166 (PYRPCVGLMI…KRKVYEEVVA (154 aa)). Residues 54–75 (GGIDKGEEPLQAAERELYEETG) carry the Nudix box motif.

The protein belongs to the Nudix hydrolase family. RppH subfamily. A divalent metal cation serves as cofactor.

Its function is as follows. Accelerates the degradation of transcripts by removing pyrophosphate from the 5'-end of triphosphorylated RNA, leading to a more labile monophosphorylated state that can stimulate subsequent ribonuclease cleavage. This Mesorhizobium japonicum (strain LMG 29417 / CECT 9101 / MAFF 303099) (Mesorhizobium loti (strain MAFF 303099)) protein is RNA pyrophosphohydrolase.